The following is a 301-amino-acid chain: ATP synthase gamma chain (301 aa).

Belongs to the ATPase gamma chain family. F-type ATPases have 2 components, CF(1) - the catalytic core - and CF(0) - the membrane proton channel. CF(1) has five subunits: alpha(3), beta(3), gamma(1), delta(1), epsilon(1). CF(0) has three main subunits: a, b and c.

It localises to the cell inner membrane. Its function is as follows. Produces ATP from ADP in the presence of a proton gradient across the membrane. The gamma chain is believed to be important in regulating ATPase activity and the flow of protons through the CF(0) complex. This Helicobacter pylori (strain G27) protein is ATP synthase gamma chain.